Here is a 324-residue protein sequence, read N- to C-terminus: Dermonecrotic toxin Hl-PLD1 (324 aa).

The N-terminal stretch at 1 to 35 (MAHCYYNSKRGCNRVMKTVALVVLISTVMVEESRG) is a signal peptide. His-50 is an active-site residue. Residues Glu-70 and Asp-72 each coordinate Mg(2+). The Nucleophile role is filled by His-86. Disulfide bonds link Cys-90/Cys-96 and Cys-92/Cys-236. Asp-130 contributes to the Mg(2+) binding site.

This sequence belongs to the arthropod phospholipase D family. Class II subfamily. It depends on Mg(2+) as a cofactor. In terms of tissue distribution, expressed by the venom gland.

The protein resides in the secreted. The catalysed reaction is an N-(acyl)-sphingosylphosphocholine = an N-(acyl)-sphingosyl-1,3-cyclic phosphate + choline. It catalyses the reaction an N-(acyl)-sphingosylphosphoethanolamine = an N-(acyl)-sphingosyl-1,3-cyclic phosphate + ethanolamine. It carries out the reaction a 1-acyl-sn-glycero-3-phosphocholine = a 1-acyl-sn-glycero-2,3-cyclic phosphate + choline. The enzyme catalyses a 1-acyl-sn-glycero-3-phosphoethanolamine = a 1-acyl-sn-glycero-2,3-cyclic phosphate + ethanolamine. Dermonecrotic toxins cleave the phosphodiester linkage between the phosphate and headgroup of certain phospholipids (sphingolipid and lysolipid substrates), forming an alcohol (often choline) and a cyclic phosphate. This toxin acts on sphingomyelin (SM) with a high activity. It may also act on ceramide phosphoethanolamine (CPE), lysophosphatidylcholine (LPC) and lysophosphatidylethanolamine (LPE), but not on lysophosphatidylserine (LPS), and lysophosphatidylglycerol (LPG). It acts by transphosphatidylation, releasing exclusively cyclic phosphate products as second products. In vivo, shows dermonecrotic activity when intradermally injected into rabbit skin and is lethal to mice. Induces increased vascular permeability, edema, inflammatory response, and platelet aggregation. Does not show hemolytic activity (at up to 50 ug). The polypeptide is Dermonecrotic toxin Hl-PLD1 (Hemiscorpius lepturus (Scorpion)).